The primary structure comprises 156 residues: Snaclec A11 (156 aa).

Positions 1 to 23 (MGRSISVSFGLLVVFLSLSGTGA) are cleaved as a signal peptide. Disulfide bonds link Cys-27-Cys-38, Cys-55-Cys-154, and Cys-129-Cys-146. Positions 34-155 (YDQHCYQAVD…CGQPYRFTCE (122 aa)) constitute a C-type lectin domain.

It belongs to the snaclec family. Heterodimer; disulfide-linked. As to expression, expressed by the venom gland.

The protein localises to the secreted. Its function is as follows. Interferes with one step of hemostasis (modulation of platelet aggregation, or coagulation cascade, for example). The polypeptide is Snaclec A11 (Macrovipera lebetinus (Levantine viper)).